The primary structure comprises 67 residues: uncharacterized protein (67 aa).

The next 2 membrane-spanning stretches (helical) occupy residues 10-30 (EFFIYIFLFIDKTNVESITMW) and 40-60 (LMVGVWIVILFLTWFLLWMVF).

It belongs to the plectrovirus ORF10 family.

The protein resides in the host membrane. This is an uncharacterized protein from Spiroplasma citri (SpV1).